The following is a 410-amino-acid chain: Peptidase T (410 aa).

Position 78 (H78) interacts with Zn(2+). Residue D80 is part of the active site. D140 serves as a coordination point for Zn(2+). E174 serves as the catalytic Proton acceptor. Residues E175, D197, and H379 each coordinate Zn(2+).

The protein belongs to the peptidase M20B family. The cofactor is Zn(2+).

The protein resides in the cytoplasm. It carries out the reaction Release of the N-terminal residue from a tripeptide.. Cleaves the N-terminal amino acid of tripeptides. The chain is Peptidase T from Vibrio cholerae serotype O1 (strain ATCC 39315 / El Tor Inaba N16961).